Here is a 474-residue protein sequence, read N- to C-terminus: Probable dipeptidase B (474 aa).

Cys11 is an active-site residue.

It belongs to the peptidase C69 family.

The catalysed reaction is an L-aminoacyl-L-amino acid + H2O = 2 an L-alpha-amino acid. This is Probable dipeptidase B (pepDB) from Lactococcus lactis subsp. lactis (strain IL1403) (Streptococcus lactis).